Here is a 281-residue protein sequence, read N- to C-terminus: Apulose-4-phosphate transketolase subunit A (281 aa).

Belongs to the transketolase family. In terms of assembly, probable heterodimer composed of AptA and AptB. It depends on thiamine diphosphate as a cofactor.

It carries out the reaction apulose 4-phosphate + D-glyceraldehyde 3-phosphate = D-xylulose 5-phosphate + dihydroxyacetone phosphate. It functions in the pathway carbohydrate metabolism. Functionally, involved in catabolism of D-apiose. Catalyzes the transfer of the glycolaldehyde group from apulose-4-phosphate to D-glyceraldehyde 3-phosphate, generating dihydroxyacetone phosphate and D-xylulose-5-phosphate. This is Apulose-4-phosphate transketolase subunit A from Phocaeicola vulgatus (strain ATCC 8482 / DSM 1447 / JCM 5826 / CCUG 4940 / NBRC 14291 / NCTC 11154) (Bacteroides vulgatus).